The primary structure comprises 373 residues: GPN-loop GTPase 1 (373 aa).

Residue A2 is modified to N-acetylalanine. 29 to 34 contacts GTP; that stretch reads GSGKTT. The short motif at 86 to 88 is the Gly-Pro-Asn (GPN)-loop; involved in dimer interface element; the sequence is GPN. 189-192 contributes to the GTP binding site; sequence NKTD. Phosphoserine is present on residues S301, S312, and S314. A disordered region spans residues 304–373; the sequence is LDTGTATGSS…SMAQYWKKNK (70 aa). Position 328 is a phosphothreonine (T328). Residues 330–342 are compositionally biased toward acidic residues; sequence DEEDEEADSDTDD. A Phosphoserine modification is found at S338. T340 is modified (phosphothreonine). A compositionally biased stretch (basic and acidic residues) spans 343-355; that stretch reads IDHRVTEESREEP.

It belongs to the GPN-loop GTPase family. Heterodimer with GPN3. Binds to RNA polymerase II (RNAPII). Interacts directly with RNAPII subunits RPB4 and RPB7 and the CTD of RPB1. Interacts with XPA.

The protein resides in the cytoplasm. Its subcellular location is the nucleus. Its function is as follows. Small GTPase required for proper nuclear import of RNA polymerase II (RNAPII). May act at an RNAP assembly step prior to nuclear import. Forms an interface between the RNA polymerase II enzyme and chaperone/scaffolding proteins, suggesting that it is required to connect RNA polymerase II to regulators of protein complex formation. May be involved in nuclear localization of XPA. The chain is GPN-loop GTPase 1 from Bos taurus (Bovine).